Consider the following 1023-residue polypeptide: MAEKRPLGPLGPMMYGKLPRLEPDPGPGHSLPLSASSQDSCNYKGAYFSCPIGGTSKAGSERLASWTPYPSLYPTGVAGSPLRGDNLLTNCLLYRPPTEGSEKIQDSSELLPFGPQAHAYPGPPLAAPKPVYRNPLCYGLSTCLGDGGTKRSLDGDWTLVTGPLLPSADPPCPLATAPGKGQPLDGTFLRGLPSGGPGKDSSLPFSPCQAFLEKYRTIQSTGFLASKYTSPYPGDAKQAMSEGPSSPWTQLAQPLGPPCQDAVAAHYPLPPPPQALPCPPSCHPEKQGSYGSLLPLPPLGAHKGAAYQAGGLGSPYLRQQAPQAPYMPPLGIDSYSYSSAPLPAPSPGLKLEPPLAPRCPLDFVPQTLGFPYARDDLSLYGASPGLGGTPPSHSQNSVQPVPQPGAFQRACQPLPASQPCSEPVRPAEKPTPEAQEKMWLPSCRKEQLQPRPNERPGVPIVIRDSPVPRTSPALHPCAKERQSVPQKDARPPSSPPMPVIDNVFSLAPYRDYLDVQTPEPRAERDSAPATSKSQDKDCKGNLPAQDGASRSHCSLREEVALDLSVKKTMAEGVPVKVPSPEVHEKPAEAVDGPGIENTVSGLPGLKKMVTEIPEVTAEATPRTNFHSSVAFMFRKFKILRTAPVPAAIVSSPTTPAPVPAPAPAQPVPNPPSVPVGLQILTQPLPVACFNLALPSPPAIVASPAPASAPPPSPAPAPAPASGPAPSSAQVPTAAPVDSPEQHFTGLHTSLCDAISGSVAHSPPEKLREWLETTGPWGQAAWQDCQGVQGLLGKLLSQLQKFVCTQRCPFPHVVRAGAIFVPIHLVKERLFPKLPPASVDHVLQDHRVELRPTTLSEERALRERALHGCTSRMLKLLALRQLPDIYPDLLGLQWHDCVRRQLGGFDTEARTLSPSEPTVTRDEPESQALAGKLPAPKVKKPGRKPPTPGPEKAEAATGEGSRNPSPSSGASTSPPGPTLRARFRNLLENAWLNGVALPTWGHKASGADRSSPHPQLLGSQTHHL.

Positions 1–35 (MAEKRPLGPLGPMMYGKLPRLEPDPGPGHSLPLSA) are disordered. At Lys17 the chain carries N6-acetyllysine. Phosphoserine occurs at positions 206 and 383. 5 disordered regions span residues 381-501 (GASP…PVID), 518-551 (PEPR…ASRS), 703-742 (PAPA…PEQH), 907-980 (EART…TLRA), and 1002-1023 (KASG…THHL). Thr389 bears the Phosphothreonine mark. Polar residues predominate over residues 391–400 (PSHSQNSVQP). 3 stretches are compositionally biased toward basic and acidic residues: residues 425–436 (RPAEKPTPEAQE), 443–454 (CRKEQLQPRPNE), and 477–490 (CAKE…KDAR). A phosphoserine mark is found at Ser493 and Ser494. The segment covering 706–722 (ASAPPPSPAPAPAPASG) has biased composition (pro residues). Phosphoserine is present on residues Ser912, Ser964, and Ser972. A compositionally biased stretch (low complexity) spans 963 to 972 (PSPSSGASTS).

This is an uncharacterized protein from Mus musculus (Mouse).